A 499-amino-acid polypeptide reads, in one-letter code: Probable cytosol aminopeptidase (499 aa).

Mn(2+) is bound by residues lysine 263 and aspartate 268. Residue lysine 275 is part of the active site. The Mn(2+) site is built by aspartate 286, aspartate 345, and glutamate 347. Arginine 349 is an active-site residue.

The protein belongs to the peptidase M17 family. Requires Mn(2+) as cofactor.

The protein resides in the cytoplasm. It catalyses the reaction Release of an N-terminal amino acid, Xaa-|-Yaa-, in which Xaa is preferably Leu, but may be other amino acids including Pro although not Arg or Lys, and Yaa may be Pro. Amino acid amides and methyl esters are also readily hydrolyzed, but rates on arylamides are exceedingly low.. The catalysed reaction is Release of an N-terminal amino acid, preferentially leucine, but not glutamic or aspartic acids.. Functionally, presumably involved in the processing and regular turnover of intracellular proteins. Catalyzes the removal of unsubstituted N-terminal amino acids from various peptides. This Bradyrhizobium sp. (strain BTAi1 / ATCC BAA-1182) protein is Probable cytosol aminopeptidase.